A 249-amino-acid chain; its full sequence is tRNA pseudouridine synthase A (249 aa).

D53 serves as the catalytic Nucleophile. Position 111 (Y111) interacts with substrate.

The protein belongs to the tRNA pseudouridine synthase TruA family. Homodimer.

It catalyses the reaction uridine(38/39/40) in tRNA = pseudouridine(38/39/40) in tRNA. Functionally, formation of pseudouridine at positions 38, 39 and 40 in the anticodon stem and loop of transfer RNAs. The sequence is that of tRNA pseudouridine synthase A from Streptococcus pneumoniae (strain Taiwan19F-14).